A 336-amino-acid polypeptide reads, in one-letter code: MKTKTNKPLIVMAVTFLLIVVVFFISLNLGVIKIAPLKTLQVFFGQGTARDELVLFEFRLPRIILSLLVGAGISVAGAILQSVSQNELAEPGILGINAGGSLAVVLFIYFFQGSASDLSFFGTFMLPFSALAGAILAAFLIYILAWKKGVTPIRLILVGIGVNAGFNALLLIFQLKMDPHDFMQAAVWISGSIWGANWNMIWAILPWIVILLLFTLYKARYLNIMQLGDQLATGLGTAVEKERRILLLAAVTLAASCVAAAGGIAFLGLIAPHVARRLTGPRHQTLIPVSAFIGSFLFLLADTLARNVLAPSEIPVGLVISVLGAPYFIYLLMKAN.

Transmembrane regions (helical) follow at residues 9–29 (LIVMAVTFLLIVVVFFISLNL), 63–83 (IILSLLVGAGISVAGAILQSV), 91–111 (PGILGINAGGSLAVVLFIYFF), 124–144 (FMLPFSALAGAILAAFLIYIL), 155–175 (LILVGIGVNAGFNALLLIFQL), 193–213 (IWGANWNMIWAILPWIVILLL), 245–265 (ILLLAAVTLAASCVAAAGGIA), 285–305 (TLIPVSAFIGSFLFLLADTLA), and 313–333 (EIPVGLVISVLGAPYFIYLLM).

This sequence belongs to the binding-protein-dependent transport system permease family. FecCD subfamily. In terms of assembly, the complex is composed of an ATP-binding protein (FhuC), two transmembrane proteins (FhuB and FhuG) and a solute-binding protein (FhuD or YxeB).

The protein resides in the cell membrane. Part of the ABC transporter complex FhuBGCD involved in iron(3+)-hydroxamate import. Responsible for the translocation of the substrate across the membrane. The chain is Iron(3+)-hydroxamate import system permease protein FhuG (fhuG) from Bacillus subtilis (strain 168).